The primary structure comprises 73 residues: Mu-scoloptoxin(15)-Ssd1a (73 aa).

A signal peptide spans 1 to 20 (MKFHIIFCLLAALMMTSAFA).

Post-translationally, contains 2 disulfide bonds. In terms of tissue distribution, expressed by the venom gland.

Its subcellular location is the secreted. Voltage-gated sodium channel inhibitor. This Scolopendra dehaani (Thai centipede) protein is Mu-scoloptoxin(15)-Ssd1a.